The sequence spans 547 residues: MCAAEVDRHVSQRYLIKRRLGKGAYGIVWKAMDRRTGEVVAIKKIFDAFRDQTDAQRTFREIMLLREFGGHPNIIRLLDVIPAKNDRDIYLVFESMDTDLNAVIQKGRLLEDIHKRCIFYQLLRATKFIHSGRVIHRDQKPANVLLDAACRVKLCDFGLARSLSDFPEGPGGQALTEYVATRWYRAPEVLLSSRWYTPGVDMWSLGCILGEMLRGQPLFPGTSTFHQLELILETIPLPSMEELQGLGSDYSALILQNLGSRPRQTLDALLPPDTPPEALDLLKRLLAFAPDKRLSAEQALQHPYVQRFHCPDREWTRGSDVRLPVHEGDQLSAPEYRNRLYQMILERRRNSRSPREEDLGVVASRAELRASQRQSLKPGVLPQVLAETPARKRGPKPQNGHGHDPEHVEVRRQSSDPLYQLPPPGSGERPPGATGEPPSAPSGVKTHVRAVAPSLTSQAAAQAANQPLIRSDPARGGGPRAVGARRVPSRLPREAPEPRPGRRMFGISVSQGAQGAARAALGGYSQAYGTVCRSALGRLPLLPGPRA.

Residues 1-20 (MCAAEVDRHVSQRYLIKRRL) form a ubiquitin-conjugating region. The Protein kinase domain occupies 14-305 (YLIKRRLGKG…AEQALQHPYV (292 aa)). Residues 20–28 (LGKGAYGIV) and K43 contribute to the ATP site. D138 (proton acceptor) is an active-site residue. T176 carries the phosphothreonine modification. The short motif at 176–178 (TEY) is the TXY element. At Y178 the chain carries Phosphotyrosine. Residues 266-286 (LDALLPPDTPPEALDLLKRLL) form a necessary to interact with ESRRA, to regulate its subcellular localization and to inhibit its transcriptional activity region. Residues 301–380 (QHPYVQRFHC…SQRQSLKPGV (80 aa)) form a requires for interaction with GABARAP, MAP1LC3B AND GABARAPL1 region. The tract at residues 370 to 503 (ASQRQSLKPG…EAPEPRPGRR (134 aa)) is disordered. PXXXP motif repeat units lie at residues 378–382 (PGVLP) and 385–389 (LAETP). 2 PXXXP motif; regulates binding with chromatin and interaction with PCNA repeats span residues 393-397 (RGPKP) and 401-405 (HGHDP). The span at 401-414 (HGHDPEHVEVRRQS) shows a compositional bias: basic and acidic residues. R449 carries the omega-N-methylarginine modification. The span at 454–465 (SLTSQAAAQAAN) shows a compositional bias: polar residues. Over residues 481-490 (AVGARRVPSR) the composition is skewed to low complexity. Residues 491–500 (LPREAPEPRP) are compositionally biased toward basic and acidic residues.

This sequence belongs to the protein kinase superfamily. CMGC Ser/Thr protein kinase family. MAP kinase subfamily. Interacts with CSK/c-Src, ABL1, RET and TGFB1I1. Interacts with GABARAP, MAP1LC3B and GABARAPL1; controls, in a kinase-dependent fashion, both basal and starvation-induced autophagy. Interacts with ESRRA; promotes re-localization of ESRRA to the cytoplasm through a XPO1-dependent mechanism then inhibits ESRRA transcriptional activity. Interacts with PCNA; the interaction is chromatin binding- and kinase activity-dependent and prevents MDM2-mediated PCNA destruction by inhibiting the association of PCNA with MDM2. Interacts with DVL2. Interacts with CLIC3; MAPK15 does not phosphorylates CLIC3. In terms of processing, autophosphorylated on Thr-176 and Tyr-178; activates the enzyme. Post-translationally, dephosphorylated by PTPN1. Ubiquitinated. Ubiquitination may allow its tight kinase activity regulation and rapid turnover. May be ubiquitinated by a SCF E3 ligase. As to expression, ubiquitously expressed at a weak level. Highest expression is found in testis and to a lower extent in lung.

Its subcellular location is the cytoplasm. The protein resides in the cytoskeleton. It localises to the cilium basal body. The protein localises to the cell junction. It is found in the tight junction. Its subcellular location is the microtubule organizing center. The protein resides in the centrosome. It localises to the centriole. The protein localises to the cytoplasmic vesicle. It is found in the autophagosome. Its subcellular location is the golgi apparatus. The protein resides in the nucleus. It localises to the spindle. It carries out the reaction L-seryl-[protein] + ATP = O-phospho-L-seryl-[protein] + ADP + H(+). It catalyses the reaction L-threonyl-[protein] + ATP = O-phospho-L-threonyl-[protein] + ADP + H(+). Activated by threonine and tyrosine phosphorylation. Inhibited by dual specificity phosphatases, such as DUSP1. Phosphorylation and activation in response to DNA damaging agents, serum stimulation. Constitutively activated when phosphorylated on Tyr-178. Activity depends on the relative rates of MAPK15 autophosphorylation and dephosphorylation by PTPN1. Functionally, atypical MAPK protein that regulates several process such as autophagy, ciliogenesis, protein trafficking/secretion and genome integrity, in a kinase activity-dependent manner. Controls both, basal and starvation-induced autophagy throught its interaction with GABARAP, MAP1LC3B and GABARAPL1 leading to autophagosome formation, SQSTM1 degradation and reduced MAP1LC3B inhibitory phosphorylation. Regulates primary cilium formation and the localization of ciliary proteins involved in cilium structure, transport, and signaling. Prevents the relocation of the sugar-adding enzymes from the Golgi to the endoplasmic reticulum, thereby restricting the production of sugar-coated proteins. Upon amino-acid starvation, mediates transitional endoplasmic reticulum site disassembly and inhibition of secretion. Binds to chromatin leading to MAPK15 activation and interaction with PCNA, that which protects genomic integrity by inhibiting MDM2-mediated degradation of PCNA. Regulates DA transporter (DAT) activity and protein expression via activation of RhoA. In response to H(2)O(2) treatment phosphorylates ELAVL1, thus preventing it from binding to the PDCD4 3'UTR and rendering the PDCD4 mRNA accessible to miR-21 and leading to its degradation and loss of protein expression. Also functions in a kinase activity-independent manner as a negative regulator of growth. Phosphorylates in vitro FOS and MBP. During oocyte maturation, plays a key role in the microtubule organization and mei- otic cell cycle progression in oocytes, fertilized eggs, and early embryos. Interacts with ESRRA promoting its re-localization from the nucleus to the cytoplasm and then prevents its transcriptional activity. In Rattus norvegicus (Rat), this protein is Mitogen-activated protein kinase 15 (Mapk15).